A 113-amino-acid chain; its full sequence is Hydrogenase maturation factor HypA (113 aa).

H2 provides a ligand contact to Ni(2+). Zn(2+) contacts are provided by C73, C76, C89, and C92.

This sequence belongs to the HypA/HybF family.

Its function is as follows. Involved in the maturation of [NiFe] hydrogenases. Required for nickel insertion into the metal center of the hydrogenase. The protein is Hydrogenase maturation factor HypA of Azotobacter chroococcum mcd 1.